Consider the following 351-residue polypeptide: Uroporphyrinogen decarboxylase (351 aa).

Substrate contacts are provided by residues 25-29 (RQAGR), Asp74, Tyr151, Ser206, and His325.

This sequence belongs to the uroporphyrinogen decarboxylase family. Homodimer.

Its subcellular location is the cytoplasm. The enzyme catalyses uroporphyrinogen III + 4 H(+) = coproporphyrinogen III + 4 CO2. Its pathway is porphyrin-containing compound metabolism; protoporphyrin-IX biosynthesis; coproporphyrinogen-III from 5-aminolevulinate: step 4/4. Its function is as follows. Catalyzes the decarboxylation of four acetate groups of uroporphyrinogen-III to yield coproporphyrinogen-III. The chain is Uroporphyrinogen decarboxylase from Chlorobium limicola (strain DSM 245 / NBRC 103803 / 6330).